Here is a 314-residue protein sequence, read N- to C-terminus: tRNA-cytidine(32) 2-sulfurtransferase (314 aa).

Residues Ser53–Ser58 carry the PP-loop motif motif. Positions 128, 131, and 219 each coordinate [4Fe-4S] cluster.

Belongs to the TtcA family. As to quaternary structure, homodimer. The cofactor is Mg(2+). [4Fe-4S] cluster is required as a cofactor.

Its subcellular location is the cytoplasm. It carries out the reaction cytidine(32) in tRNA + S-sulfanyl-L-cysteinyl-[cysteine desulfurase] + AH2 + ATP = 2-thiocytidine(32) in tRNA + L-cysteinyl-[cysteine desulfurase] + A + AMP + diphosphate + H(+). It participates in tRNA modification. Functionally, catalyzes the ATP-dependent 2-thiolation of cytidine in position 32 of tRNA, to form 2-thiocytidine (s(2)C32). The sulfur atoms are provided by the cysteine/cysteine desulfurase (IscS) system. This chain is tRNA-cytidine(32) 2-sulfurtransferase, found in Colwellia psychrerythraea (strain 34H / ATCC BAA-681) (Vibrio psychroerythus).